The chain runs to 576 residues: Glucose-6-phosphate 1-dehydrogenase 1, chloroplastic (576 aa).

Residues 1 to 50 constitute a chloroplast transit peptide; it reads MATHSMIIPSPSSSSSSLATAASPFKETLPLFSRSLTFPRKSLFSQVRLR. NADP(+) is bound by residues 97–104 and arginine 131; that span reads GASGDLAK. A disulfide bridge connects residues cysteine 149 and cysteine 157. Position 234 (lysine 234) interacts with NADP(+). Residues lysine 234, 264 to 268, glutamate 302, and aspartate 321 contribute to the D-glucose 6-phosphate site; that span reads HYLGK. Histidine 326 acts as the Proton acceptor in catalysis. Position 419 (lysine 419) interacts with NADP(+). 2 residues coordinate D-glucose 6-phosphate: lysine 422 and arginine 427. NADP(+) contacts are provided by arginine 432 and arginine 461. Residue glutamine 463 coordinates D-glucose 6-phosphate. NADP(+) contacts are provided by residues 469 to 471 and arginine 554; that span reads YLR.

It belongs to the glucose-6-phosphate dehydrogenase family. As to quaternary structure, forms homodimer. Interacts with G6PD2, G6PD3 and G6PD4. In terms of tissue distribution, expressed in leaves, stems, buds, flowers and siliques.

The protein localises to the plastid. Its subcellular location is the chloroplast stroma. It localises to the peroxisome. The enzyme catalyses D-glucose 6-phosphate + NADP(+) = 6-phospho-D-glucono-1,5-lactone + NADPH + H(+). The protein operates within carbohydrate degradation; pentose phosphate pathway; D-ribulose 5-phosphate from D-glucose 6-phosphate (oxidative stage): step 1/3. Its activity is regulated as follows. Regulated by metabolites. Post-translationally inactivated by cysteine-mediated redox modification via the ferredoxin-thioredoxin system in the light and this avoids futile cycles with photosynthetic CO2 fixation. Its function is as follows. Catalyzes the rate-limiting step of the oxidative pentose-phosphate pathway, which represents a route for the dissimilation of carbohydrates besides glycolysis. The main function of this enzyme is to provide reducing power (NADPH) and pentose phosphates for fatty acid and nucleic acid synthesis which are involved in membrane synthesis and cell division. This Arabidopsis thaliana (Mouse-ear cress) protein is Glucose-6-phosphate 1-dehydrogenase 1, chloroplastic.